A 205-amino-acid chain; its full sequence is Glycerol-3-phosphate acyltransferase (205 aa).

The next 5 helical transmembrane spans lie at 3–23 (VFALGMILFAYLCGSLSSAIL), 53–73 (GVAATVLVFDVLKGMLPVWLA), 80–100 (PFYLGLTAIAACLGHIYPVFF), 112–132 (LGAIAPIGWDLTGLMTGTWLL), and 138–158 (GYSSLGAIVSALIAPFYVWWF).

The protein belongs to the PlsY family. In terms of assembly, probably interacts with PlsX.

Its subcellular location is the cell inner membrane. The enzyme catalyses an acyl phosphate + sn-glycerol 3-phosphate = a 1-acyl-sn-glycero-3-phosphate + phosphate. It participates in lipid metabolism; phospholipid metabolism. In terms of biological role, catalyzes the transfer of an acyl group from acyl-phosphate (acyl-PO(4)) to glycerol-3-phosphate (G3P) to form lysophosphatidic acid (LPA). This enzyme utilizes acyl-phosphate as fatty acyl donor, but not acyl-CoA or acyl-ACP. The sequence is that of Glycerol-3-phosphate acyltransferase from Erwinia tasmaniensis (strain DSM 17950 / CFBP 7177 / CIP 109463 / NCPPB 4357 / Et1/99).